Reading from the N-terminus, the 183-residue chain is uncharacterized protein (183 aa).

Transmembrane regions (helical) follow at residues 13–35, 60–82, 117–139, and 149–171; these read KALL…LTYS, LLIL…KLRF, FEPV…YAIF, and LLFY…LYLS.

The protein resides in the cell membrane. This is an uncharacterized protein from Archaeoglobus fulgidus (strain ATCC 49558 / DSM 4304 / JCM 9628 / NBRC 100126 / VC-16).